Reading from the N-terminus, the 345-residue chain is Anthranilate phosphoribosyltransferase (345 aa).

5-phospho-alpha-D-ribose 1-diphosphate is bound by residues Gly75, 78-79, Ser83, 85-88, 103-111, and Gly115; these read GD, NIST, and KHGNRAASS. Gly75 is a binding site for anthranilate. Ser87 contributes to the Mg(2+) binding site. Residue Asn106 participates in anthranilate binding. Anthranilate is bound at residue Arg161. The Mg(2+) site is built by Asp219 and Glu220.

Belongs to the anthranilate phosphoribosyltransferase family. In terms of assembly, homodimer. Mg(2+) is required as a cofactor.

The enzyme catalyses N-(5-phospho-beta-D-ribosyl)anthranilate + diphosphate = 5-phospho-alpha-D-ribose 1-diphosphate + anthranilate. Its pathway is amino-acid biosynthesis; L-tryptophan biosynthesis; L-tryptophan from chorismate: step 2/5. Functionally, catalyzes the transfer of the phosphoribosyl group of 5-phosphorylribose-1-pyrophosphate (PRPP) to anthranilate to yield N-(5'-phosphoribosyl)-anthranilate (PRA). This is Anthranilate phosphoribosyltransferase from Nocardia farcinica (strain IFM 10152).